The primary structure comprises 381 residues: Prolargin (381 aa).

An N-terminal signal peptide occupies residues 1–21; that stretch reads MRSSLCWLLTLLLILATAAQG. Residues 19 to 65 form a disordered region; the sequence is AQGQPTRRPRPRPRPRPRPRLRPTPSFPQPDEPTEPTDLPPPLPPGP. Over residues 25 to 39 the composition is skewed to basic residues; it reads RRPRPRPRPRPRPRL. Positions 56 to 65 are enriched in pro residues; sequence DLPPPLPPGP. LRR repeat units follow at residues 94 to 113, 114 to 137, 138 to 161, 162 to 182, 183 to 206, 207 to 232, 233 to 253, 254 to 277, 278 to 302, 303 to 322, 323 to 361, and 362 to 381; these read RKVP…NNFI, TELP…NNRI, RKVD…KNQL, EEVP…QNQI, SRIP…HNKL, SDGV…HNTL, RKMP…SNRI, EAIP…YNQL, SDRG…HNRI, SSVP…NNSI, EKIN…GNYL, and KPPI…SVVI. A glycan (N-linked (GlcNAc...) asparagine) is linked at Asn-123. 3 N-linked (GlcNAc...) asparagine glycosylation sites follow: Asn-288, Asn-319, and Asn-326. A disulfide bridge links Cys-331 with Cys-372.

It belongs to the small leucine-rich proteoglycan (SLRP) family. SLRP class II subfamily. Binds the basement membrane heparan sulfate proteoglycan perlecan and triple helical collagens type I and type II. Post-translationally, glycosylated; contains heparan sulfate.

The protein localises to the secreted. The protein resides in the extracellular space. It localises to the extracellular matrix. May anchor basement membranes to the underlying connective tissue. The chain is Prolargin (PRELP) from Bos taurus (Bovine).